We begin with the raw amino-acid sequence, 542 residues long: Chaperonin GroEL (542 aa).

ATP is bound by residues 29 to 32 (TIGP), 86 to 90 (DGTTT), Gly-413, 477 to 479 (NAA), and Asp-493.

This sequence belongs to the chaperonin (HSP60) family. As to quaternary structure, forms a cylinder of 14 subunits composed of two heptameric rings stacked back-to-back. Interacts with the co-chaperonin GroES.

The protein resides in the cytoplasm. The enzyme catalyses ATP + H2O + a folded polypeptide = ADP + phosphate + an unfolded polypeptide.. Its function is as follows. Together with its co-chaperonin GroES, plays an essential role in assisting protein folding. The GroEL-GroES system forms a nano-cage that allows encapsulation of the non-native substrate proteins and provides a physical environment optimized to promote and accelerate protein folding. The chain is Chaperonin GroEL from Lactobacillus acidophilus (strain ATCC 700396 / NCK56 / N2 / NCFM).